The chain runs to 284 residues: Shikimate dehydrogenase (NADP(+)) (284 aa).

Residues 23-25 and threonine 70 each bind shikimate; that span reads SLS. The active-site Proton acceptor is lysine 74. Glutamate 86 provides a ligand contact to NADP(+). Positions 95 and 111 each coordinate shikimate. Residues 135 to 139, 159 to 164, and alanine 227 contribute to the NADP(+) site; these read GAGGA and NRTPGR. Tyrosine 229 lines the shikimate pocket. Glycine 251 lines the NADP(+) pocket.

It belongs to the shikimate dehydrogenase family. In terms of assembly, homodimer.

The catalysed reaction is shikimate + NADP(+) = 3-dehydroshikimate + NADPH + H(+). It participates in metabolic intermediate biosynthesis; chorismate biosynthesis; chorismate from D-erythrose 4-phosphate and phosphoenolpyruvate: step 4/7. Functionally, involved in the biosynthesis of the chorismate, which leads to the biosynthesis of aromatic amino acids. Catalyzes the reversible NADPH linked reduction of 3-dehydroshikimate (DHSA) to yield shikimate (SA). The chain is Shikimate dehydrogenase (NADP(+)) from Rubrobacter xylanophilus (strain DSM 9941 / JCM 11954 / NBRC 16129 / PRD-1).